We begin with the raw amino-acid sequence, 432 residues long: Ornithine decarboxylase, chloroplastic (432 aa).

K95 bears the N6-(pyridoxal phosphate)lysine mark. Pyridoxal 5'-phosphate contacts are provided by residues S227, G265, and 298-301; that span reads EPGR. A substrate-binding site is contributed by 341–342; sequence YD. C377 serves as the catalytic Proton donor; shared with dimeric partner. Residue D378 coordinates substrate. Residue Y406 coordinates pyridoxal 5'-phosphate.

It belongs to the Orn/Lys/Arg decarboxylase class-II family. As to quaternary structure, homodimer. Only the dimer is catalytically active, as the active sites are constructed of residues from both monomers. It depends on pyridoxal 5'-phosphate as a cofactor.

It is found in the plastid. Its subcellular location is the chloroplast. It catalyses the reaction L-lysine + H(+) = cadaverine + CO2. The catalysed reaction is L-ornithine + H(+) = putrescine + CO2. The protein operates within alkaloid biosynthesis; nicotine biosynthesis. It functions in the pathway amine and polyamine biosynthesis; putrescine biosynthesis via L-ornithine pathway; putrescine from L-ornithine: step 1/1. Its activity is regulated as follows. Repressed by alpha-difluoromethylornithine (DFMO), 5,5'-dithiobis-(2-nitrobenzoic acid) (DTNB) and salicylaldehyde. Its function is as follows. Involved in the biosynthesis of pyridine alkaloid natural products, leading mainly to the production of anabasine, anatabine, nicotine and nornicotine, effective deterrents against herbivores with antiparasitic and pesticide properties (neurotoxins); nornicotine serves as the precursor in the synthesis of the carcinogen compound N'-nitrosonornicotine (NNN). Catalyzes the first and rate-limiting step of polyamine biosynthesis that converts ornithine into putrescine, which is the precursor for the polyamines, spermidine and spermine. Can also use, with a lower efficiency, L-lysine as substrate to produce cadaverine. Polyamines are essential for cell proliferation and are implicated in cellular processes, ranging from DNA replication to apoptosis. This is Ornithine decarboxylase, chloroplastic from Nicotiana glutinosa (Tobacco).